Here is a 366-residue protein sequence, read N- to C-terminus: Peptide chain release factor 2 (366 aa).

The residue at position 251 (Q251) is an N5-methylglutamine.

The protein belongs to the prokaryotic/mitochondrial release factor family. In terms of processing, methylated by PrmC. Methylation increases the termination efficiency of RF2.

It localises to the cytoplasm. In terms of biological role, peptide chain release factor 2 directs the termination of translation in response to the peptide chain termination codons UGA and UAA. This is Peptide chain release factor 2 (prfB) from Listeria monocytogenes serovar 1/2a (strain ATCC BAA-679 / EGD-e).